Reading from the N-terminus, the 72-residue chain is Conotoxin Gla(2)-TxVI/A (72 aa).

Positions 1–19 (MQKLIILLLVAAVLMSTQA) are cleaved as a signal peptide. A propeptide spanning residues 20 to 44 (LFQEKRPMKKIDFLSKGKTDAEKQQ) is cleaved from the precursor. 3 disulfide bridges follow: Cys-48–Cys-62, Cys-55–Cys-66, and Cys-61–Cys-70. The residue at position 56 (Glu-56) is a 4-carboxyglutamate. 4-hydroxyproline is present on Pro-58. Residue Ser-71 is modified to Serine amide.

This sequence belongs to the conotoxin O2 superfamily. Post-translationally, brominated at one of the Trp residues. As to expression, expressed by the venom duct.

It is found in the secreted. The protein is Conotoxin Gla(2)-TxVI/A of Conus textile (Cloth-of-gold cone).